Consider the following 367-residue polypeptide: NAD(P)H-quinone oxidoreductase subunit 1, chloroplastic (367 aa).

7 helical membrane passes run Leu-30–Leu-50, Phe-98–Phe-118, Leu-127–Met-147, Ala-164–Leu-184, Leu-273–Pro-293, Val-304–Ile-324, and Leu-340–Thr-360.

The protein belongs to the complex I subunit 1 family. As to quaternary structure, NDH is composed of at least 16 different subunits, 5 of which are encoded in the nucleus.

It is found in the plastid. It localises to the chloroplast thylakoid membrane. The catalysed reaction is a plastoquinone + NADH + (n+1) H(+)(in) = a plastoquinol + NAD(+) + n H(+)(out). It carries out the reaction a plastoquinone + NADPH + (n+1) H(+)(in) = a plastoquinol + NADP(+) + n H(+)(out). In terms of biological role, NDH shuttles electrons from NAD(P)H:plastoquinone, via FMN and iron-sulfur (Fe-S) centers, to quinones in the photosynthetic chain and possibly in a chloroplast respiratory chain. The immediate electron acceptor for the enzyme in this species is believed to be plastoquinone. Couples the redox reaction to proton translocation, and thus conserves the redox energy in a proton gradient. This is NAD(P)H-quinone oxidoreductase subunit 1, chloroplastic from Nicotiana tabacum (Common tobacco).